Here is a 386-residue protein sequence, read N- to C-terminus: MGSRTDPWSARLAKAAEQRHADGGWRQRPTLSDVAPFIDFAGNDYLGLADDPRLAEAQAEAARRLGAGAKASHLVSGHLEIHERLERRLAQLTGRPRALLFSTGYMANLGVLQALCDHHTRVFQDRLNHASLIDGARLAGATSRRFHHRDLEDLERLLARAPDDAPTLVVSDGVFSMDGDVAEVGALAATARRHGAWLMIDDAHGLGVLGEVGDGCVGRAHDRREVPVLVGTLGKALGSAGAFVAGDEALIDHLIQFARPYVYTTAQPPGVAAATLTALDVLEREPERRARLHERSADFRREAGTLGLPLTDSRTPIQPIVLGDNARVMRWAERLARAGLRVGAIRAPTVPKGEARLRITLSATHDDDALDALLEGLATCQREEAA.

R26 provides a ligand contact to substrate. 104 to 105 is a binding site for pyridoxal 5'-phosphate; sequence GY. H129 lines the substrate pocket. 3 residues coordinate pyridoxal 5'-phosphate: S176, H204, and T232. At K235 the chain carries N6-(pyridoxal phosphate)lysine. T349 lines the substrate pocket.

The protein belongs to the class-II pyridoxal-phosphate-dependent aminotransferase family. BioF subfamily. Homodimer. Pyridoxal 5'-phosphate is required as a cofactor.

The enzyme catalyses 6-carboxyhexanoyl-[ACP] + L-alanine + H(+) = (8S)-8-amino-7-oxononanoate + holo-[ACP] + CO2. The protein operates within cofactor biosynthesis; biotin biosynthesis. Catalyzes the decarboxylative condensation of pimeloyl-[acyl-carrier protein] and L-alanine to produce 8-amino-7-oxononanoate (AON), [acyl-carrier protein], and carbon dioxide. The chain is 8-amino-7-oxononanoate synthase from Chromohalobacter salexigens (strain ATCC BAA-138 / DSM 3043 / CIP 106854 / NCIMB 13768 / 1H11).